Reading from the N-terminus, the 327-residue chain is Phenylalanine--tRNA ligase alpha subunit (327 aa).

Glu252 provides a ligand contact to Mg(2+).

Belongs to the class-II aminoacyl-tRNA synthetase family. Phe-tRNA synthetase alpha subunit type 1 subfamily. In terms of assembly, tetramer of two alpha and two beta subunits. The cofactor is Mg(2+).

The protein localises to the cytoplasm. It carries out the reaction tRNA(Phe) + L-phenylalanine + ATP = L-phenylalanyl-tRNA(Phe) + AMP + diphosphate + H(+). The protein is Phenylalanine--tRNA ligase alpha subunit of Photorhabdus laumondii subsp. laumondii (strain DSM 15139 / CIP 105565 / TT01) (Photorhabdus luminescens subsp. laumondii).